Here is a 70-residue protein sequence, read N- to C-terminus: Testis-expressed protein 53 (70 aa).

In terms of tissue distribution, expressed in Testis.

This chain is Testis-expressed protein 53, found in Homo sapiens (Human).